The chain runs to 547 residues: Chaperonin GroEL (547 aa).

ATP contacts are provided by residues 30–33 (TLGP), Lys51, 87–91 (DGTTT), Gly415, 479–481 (NAA), and Asp495.

It belongs to the chaperonin (HSP60) family. As to quaternary structure, forms a cylinder of 14 subunits composed of two heptameric rings stacked back-to-back. Interacts with the co-chaperonin GroES.

It is found in the cytoplasm. The catalysed reaction is ATP + H2O + a folded polypeptide = ADP + phosphate + an unfolded polypeptide.. In terms of biological role, together with its co-chaperonin GroES, plays an essential role in assisting protein folding. The GroEL-GroES system forms a nano-cage that allows encapsulation of the non-native substrate proteins and provides a physical environment optimized to promote and accelerate protein folding. The polypeptide is Chaperonin GroEL (Bordetella bronchiseptica (strain ATCC BAA-588 / NCTC 13252 / RB50) (Alcaligenes bronchisepticus)).